The following is a 240-amino-acid chain: Adapter protein MecA (240 aa).

This sequence belongs to the MecA family. As to quaternary structure, homodimer.

Functionally, enables the recognition and targeting of unfolded and aggregated proteins to the ClpC protease or to other proteins involved in proteolysis. This chain is Adapter protein MecA, found in Streptococcus mutans serotype c (strain ATCC 700610 / UA159).